Here is a 154-residue protein sequence, read N- to C-terminus: MRFCRGTVLGRSAAGMAVLLALGACYEEDDQTLPSAAPGESVAAESTHWLEIDDSRSPETFLSAESGLPAQTLAPLLGALSAHYRESPRMIANRVLQLWQEYPDTPLERIMADLVPARDAPEESLGPVAQQYRVLRAGGAGHADAVAAAMGQRE.

This Paracoccus denitrificans protein is Protein MoxZ (moxZ).